The sequence spans 209 residues: Large ribosomal subunit protein uL3 (209 aa).

This sequence belongs to the universal ribosomal protein uL3 family. Part of the 50S ribosomal subunit. Forms a cluster with proteins L14 and L19.

Functionally, one of the primary rRNA binding proteins, it binds directly near the 3'-end of the 23S rRNA, where it nucleates assembly of the 50S subunit. The chain is Large ribosomal subunit protein uL3 from Nitratidesulfovibrio vulgaris (strain DSM 19637 / Miyazaki F) (Desulfovibrio vulgaris).